Reading from the N-terminus, the 158-residue chain is Transcription elongation factor GreA (158 aa).

Residues 47–74 adopt a coiled-coil conformation; it reads NSEYDEAKNEQAFTEGRIIQLENMLKNA.

Belongs to the GreA/GreB family.

In terms of biological role, necessary for efficient RNA polymerase transcription elongation past template-encoded arresting sites. The arresting sites in DNA have the property of trapping a certain fraction of elongating RNA polymerases that pass through, resulting in locked ternary complexes. Cleavage of the nascent transcript by cleavage factors such as GreA or GreB allows the resumption of elongation from the new 3'terminus. GreA releases sequences of 2 to 3 nucleotides. The protein is Transcription elongation factor GreA of Clostridium perfringens (strain ATCC 13124 / DSM 756 / JCM 1290 / NCIMB 6125 / NCTC 8237 / Type A).